We begin with the raw amino-acid sequence, 470 residues long: Serine/threonine-protein kinase-like protein At1g28390 (470 aa).

A Protein kinase domain is found at 52–333; it reads FSANNFLGKG…LEVVECLKTV (282 aa). Residues 58-66 and K81 each bind ATP; that span reads LGKGSHGRV. D186 functions as the Proton acceptor in the catalytic mechanism. Residues T221 and T226 each carry the phosphothreonine modification. At Y234 the chain carries Phosphotyrosine.

Belongs to the protein kinase superfamily. Ser/Thr protein kinase family.

It catalyses the reaction L-seryl-[protein] + ATP = O-phospho-L-seryl-[protein] + ADP + H(+). The enzyme catalyses L-threonyl-[protein] + ATP = O-phospho-L-threonyl-[protein] + ADP + H(+). This chain is Serine/threonine-protein kinase-like protein At1g28390, found in Arabidopsis thaliana (Mouse-ear cress).